The primary structure comprises 442 residues: Lysosomal dipeptide transporter MFSD1 (442 aa).

The Dileucine internalization motif signature appears at Leu8 to Leu9. The next 10 membrane-spanning stretches (helical) occupy residues Leu38–Pro58, Thr85–Val105, Ala107–Val127, Leu187–Leu207, Leu238–Leu258, Ala276–Val296, Ile303–Thr323, Leu333–Val353, Phe364–Leu384, and Leu390–Leu410.

This sequence belongs to the major facilitator superfamily. Homodimer. Interacts with lysosomal protein GLMP (via lumenal domain); the interaction starts while both proteins are still in the endoplasmic reticulum and is required for stabilization of MFSD1 in lysosomes but has no direct effect on its targeting to lysosomes or transporter activity.

The protein localises to the lysosome membrane. It carries out the reaction L-alpha-aminoacyl-L-arginine(out) = L-alpha-aminoacyl-L-arginine(in). It catalyses the reaction L-arginyl-L-alpha-amino acid(out) = L-arginyl-L-alpha-amino acid(in). The enzyme catalyses L-arginyl-glycine(out) = L-arginyl-glycine(in). The catalysed reaction is L-alpha-aminoacyl-L-lysine(out) = L-alpha-aminoacyl-L-lysine(in). It carries out the reaction L-aspartyl-L-lysine(out) = L-aspartyl-L-lysine(in). It catalyses the reaction L-alanyl-L-lysine(out) = L-alanyl-L-lysine(in). The enzyme catalyses L-lysyl-L-alpha-amino acid(out) = L-lysyl-L-alpha-amino acid(in). The catalysed reaction is L-lysyl-L-alanine(out) = L-lysyl-L-alanine(in). It carries out the reaction L-lysyl-L-lysine(out) = L-lysyl-L-lysine(in). It catalyses the reaction L-lysyl-glycine(out) = L-lysyl-glycine(in). The enzyme catalyses L-alpha-aminoacyl-L-histidine(out) = L-alpha-aminoacyl-L-histidine(in). The catalysed reaction is L-histidyl-L-alpha-amino acid(out) = L-histidyl-L-alpha-amino acid(in). It carries out the reaction L-histidyl-glycine(out) = L-histidyl-glycine(in). Lysosomal dipeptide uniporter that selectively exports lysine, arginine or histidine-containing dipeptides with a net positive charge from the lysosome lumen into the cytosol. Could play a role in a specific type of protein O-glycosylation indirectly regulating macrophages migration and tissue invasion. Also essential for liver homeostasis. This is Lysosomal dipeptide transporter MFSD1 from Gallus gallus (Chicken).